We begin with the raw amino-acid sequence, 585 residues long: Aspartate--tRNA(Asp/Asn) ligase (585 aa).

Glutamate 175 contacts L-aspartate. Residues 199–202 (QLFK) form an aspartate region. Arginine 221 is a binding site for L-aspartate. ATP is bound by residues 221–223 (RDE) and glutamine 230. Histidine 448 is a binding site for L-aspartate. Glutamate 482 lines the ATP pocket. L-aspartate is bound at residue arginine 489. An ATP-binding site is contributed by 534 to 537 (GLDR).

It belongs to the class-II aminoacyl-tRNA synthetase family. Type 1 subfamily. Homodimer.

The protein localises to the cytoplasm. It catalyses the reaction tRNA(Asx) + L-aspartate + ATP = L-aspartyl-tRNA(Asx) + AMP + diphosphate. Its function is as follows. Aspartyl-tRNA synthetase with relaxed tRNA specificity since it is able to aspartylate not only its cognate tRNA(Asp) but also tRNA(Asn). Reaction proceeds in two steps: L-aspartate is first activated by ATP to form Asp-AMP and then transferred to the acceptor end of tRNA(Asp/Asn). This is Aspartate--tRNA(Asp/Asn) ligase from Natranaerobius thermophilus (strain ATCC BAA-1301 / DSM 18059 / JW/NM-WN-LF).